The following is a 448-amino-acid chain: MAKHRYLPMTEQDEKEMLDVIGVKSIDDLFQDIPEKIRFKRDYDLKPAKSEPALLRELSKLASKNANTAEYASFLGAGVYSHYIPTVVDHVISRSEFYTAYTPYQPEISQGELQAIFEFQTMIAELTGMDLANSSMYDGGTALAEAAMLASGHTKRKKILISGAVHPESSNVLKTYATGQHIEVEVIPEIDGKTDMDALKKALSEDIAGFVVQYPNFYGQVEPLAELEKLIHENNSLLLVSSNPLSLGLLTPPGEFGADIVVGDSQVFGIPESFGGPHCGFFAVTNKLMRKVPGRLVGETVDENGKRGYVLTLQAREQHIRRDKATSNICSNQALNALASSVAMATLGKTGLIEMAKQNLDKSHYAKQKFRENGFEVLFSDGFFNEFVVKLSKPIKEVNESLLDEGIIGGYDLGFYDTKYEKHMLVAVTEMRTKEEIDAFVASLEGVK.

This sequence belongs to the GcvP family. N-terminal subunit subfamily. The glycine cleavage system is composed of four proteins: P, T, L and H. In this organism, the P 'protein' is a heterodimer of two subunits.

It carries out the reaction N(6)-[(R)-lipoyl]-L-lysyl-[glycine-cleavage complex H protein] + glycine + H(+) = N(6)-[(R)-S(8)-aminomethyldihydrolipoyl]-L-lysyl-[glycine-cleavage complex H protein] + CO2. In terms of biological role, the glycine cleavage system catalyzes the degradation of glycine. The P protein binds the alpha-amino group of glycine through its pyridoxal phosphate cofactor; CO(2) is released and the remaining methylamine moiety is then transferred to the lipoamide cofactor of the H protein. The chain is Probable glycine dehydrogenase (decarboxylating) subunit 1 from Listeria welshimeri serovar 6b (strain ATCC 35897 / DSM 20650 / CCUG 15529 / CIP 8149 / NCTC 11857 / SLCC 5334 / V8).